Consider the following 168-residue polypeptide: Plastocyanin, chloroplastic (168 aa).

A chloroplast-targeting transit peptide spans 1 to 70; that stretch reads MASVAAAAVS…SSLLLVASAN (70 aa). In terms of domain architecture, Plastocyanin-like spans 71–168; that stretch reads AATVKMGGDD…AGMKGVVTVS (98 aa). Cu cation contacts are provided by histidine 108, cysteine 153, histidine 156, and methionine 161.

This sequence belongs to the plastocyanin family. The cofactor is Cu(2+).

The protein localises to the plastid. It localises to the chloroplast thylakoid membrane. Participates in electron transfer between P700 and the cytochrome b6-f complex in photosystem I. The chain is Plastocyanin, chloroplastic (PETE) from Physcomitrium patens (Spreading-leaved earth moss).